The primary structure comprises 872 residues: Alanine--tRNA ligase (872 aa).

The Zn(2+) site is built by H567, H571, C669, and H673.

It belongs to the class-II aminoacyl-tRNA synthetase family. The cofactor is Zn(2+).

It is found in the cytoplasm. The catalysed reaction is tRNA(Ala) + L-alanine + ATP = L-alanyl-tRNA(Ala) + AMP + diphosphate. Catalyzes the attachment of alanine to tRNA(Ala) in a two-step reaction: alanine is first activated by ATP to form Ala-AMP and then transferred to the acceptor end of tRNA(Ala). Also edits incorrectly charged Ser-tRNA(Ala) and Gly-tRNA(Ala) via its editing domain. The polypeptide is Alanine--tRNA ligase (Streptococcus pyogenes serotype M12 (strain MGAS2096)).